Consider the following 72-residue polypeptide: Translation initiation factor IF-1 (72 aa).

Residues M1–K72 form the S1-like domain.

This sequence belongs to the IF-1 family. Component of the 30S ribosomal translation pre-initiation complex which assembles on the 30S ribosome in the order IF-2 and IF-3, IF-1 and N-formylmethionyl-tRNA(fMet); mRNA recruitment can occur at any time during PIC assembly.

It localises to the cytoplasm. In terms of biological role, one of the essential components for the initiation of protein synthesis. Stabilizes the binding of IF-2 and IF-3 on the 30S subunit to which N-formylmethionyl-tRNA(fMet) subsequently binds. Helps modulate mRNA selection, yielding the 30S pre-initiation complex (PIC). Upon addition of the 50S ribosomal subunit IF-1, IF-2 and IF-3 are released leaving the mature 70S translation initiation complex. The sequence is that of Translation initiation factor IF-1 from Bifidobacterium adolescentis (strain ATCC 15703 / DSM 20083 / NCTC 11814 / E194a).